Consider the following 112-residue polypeptide: DNA-binding protein TSIB_0525 (112 aa).

It belongs to the PDCD5 family.

In Thermococcus sibiricus (strain DSM 12597 / MM 739), this protein is DNA-binding protein TSIB_0525.